The primary structure comprises 313 residues: Ribosomal RNA small subunit methyltransferase H (313 aa).

Residues 31 to 33 (GGH), aspartate 51, phenylalanine 77, aspartate 95, and glutamine 102 each bind S-adenosyl-L-methionine.

The protein belongs to the methyltransferase superfamily. RsmH family.

Its subcellular location is the cytoplasm. It carries out the reaction cytidine(1402) in 16S rRNA + S-adenosyl-L-methionine = N(4)-methylcytidine(1402) in 16S rRNA + S-adenosyl-L-homocysteine + H(+). In terms of biological role, specifically methylates the N4 position of cytidine in position 1402 (C1402) of 16S rRNA. This Xylella fastidiosa (strain 9a5c) protein is Ribosomal RNA small subunit methyltransferase H.